The chain runs to 235 residues: Ribosome maturation factor RimM (235 aa).

The segment covering 1–19 has biased composition (basic and acidic residues); sequence MKHEEANKEIGGRGAEGQR. Residues 1–49 form a disordered region; the sequence is MKHEEANKEIGGRGAEGQRSKRVGGNSKIQNIQSPAPNPQPIVPNTQSP. Positions 150–230 constitute a PRC barrel domain; that stretch reads EDEYHVLDLI…RIEITPPPGL (81 aa).

The protein belongs to the RimM family. In terms of assembly, binds ribosomal protein uS19.

The protein resides in the cytoplasm. An accessory protein needed during the final step in the assembly of 30S ribosomal subunit, possibly for assembly of the head region. Essential for efficient processing of 16S rRNA. May be needed both before and after RbfA during the maturation of 16S rRNA. It has affinity for free ribosomal 30S subunits but not for 70S ribosomes. This chain is Ribosome maturation factor RimM, found in Nostoc punctiforme (strain ATCC 29133 / PCC 73102).